A 401-amino-acid polypeptide reads, in one-letter code: ADP-forming sulfoacetate-CoA ligase subunit SqwK (401 aa).

The ATP-grasp domain maps to 9–217 (KTVFSEHKIP…DNSVFRQPRF (209 aa)). Position 35 to 96 (35 to 96 (KSVGFPSVVK…EEAVHIDKEI (62 aa))) interacts with ATP. Mg(2+)-binding residues include Glu-185 and Asn-187.

This sequence belongs to the succinate/malate CoA ligase beta subunit family. Forms a complex with SqwL. Mg(2+) serves as cofactor.

It catalyses the reaction sulfoacetate + ATP + CoA = sulfoacetyl-CoA + ADP + phosphate. In terms of biological role, part of a variant of the sulfo-TK pathway, a D-sulfoquinovose degradation pathway that produces sulfoacetate. Hydrolyzes sulfoacetyl-coenzyme A (sulfoacetyl-CoA) to produce sulfoacetate and CoA coupled with the phosphorylation of ADP to generate ATP. Cannot use succinate, acetate or 3-hydroxypropionate, and shows only residual activities with malonate and 3-sulfopropanoate. This is ADP-forming sulfoacetate-CoA ligase subunit SqwK from Acholeplasma sp.